A 1832-amino-acid polypeptide reads, in one-letter code: Multifunctional protein pyr-3 (1832 aa).

The GATase (Glutamine amidotransferase) stretch occupies residues 2-400 (AATVYRPATA…PGPRDTEFLF (399 aa)). 3 residues coordinate L-glutamine: Ser64, Gly273, and Gly275. In terms of domain architecture, Glutamine amidotransferase type-1 spans 228-413 (RILCLDVGMK…IQTVAKCTTD (186 aa)). Residue Cys302 is the Nucleophile; for GATase activity of the active site. L-glutamine contacts are provided by Leu303, Gln306, Asn344, Gly346, and Tyr347. Catalysis depends on for GATase activity residues His386 and Glu388. The tract at residues 401 to 442 (DVFIQTVAKCTTDNTLLQKGVEFPGGTTEENERLHPRVDVKK) is linker. A CPSase A region spans residues 443 to 983 (VLVLGSGGLS…SEHDVSFEDR (541 aa)). Residues 443-1484 (VLVLGSGGLS…TNVKNAKILV (1042 aa)) form a CPSase (Carbamoyl phosphate synthase) region. Arg560, Arg600, Gly606, Gly607, Arg637, Met639, Glu644, Gly670, Ile671, His672, Gln713, and Glu727 together coordinate ATP. 2 consecutive ATP-grasp domains span residues 564-756 (ARSM…KLGL) and 1102-1293 (SRML…KAIM). 3 residues coordinate Mg(2+): Gln713, Glu727, and Asn729. Gln713, Glu727, and Asn729 together coordinate Mn(2+). A CPSase B region spans residues 984 to 1484 (GVMVLGSGVY…TNVKNAKILV (501 aa)). ATP-binding residues include Arg1138, Lys1177, Ile1179, Glu1184, Gly1209, Val1210, His1211, Ser1212, Gln1252, and Glu1264. Mg(2+) is bound by residues Gln1252, Glu1264, and Asn1266. Mn(2+) contacts are provided by Gln1252, Glu1264, and Asn1266. The MGS-like domain maps to 1359–1507 (FKVPKKNILL…RDYQTSHTPL (149 aa)). A linker region spans residues 1485 to 1528 (EAIARYRDMEIGERDYQTSHTPLQLSGQVNFTLQDSLSRPHSFK). Residues 1529 to 1832 (KAHVLSVEQY…MALLALVMSG (304 aa)) are ATCase (Aspartate transcarbamylase). Residues Arg1581 and Thr1582 each coordinate carbamoyl phosphate. Lys1609 contributes to the L-aspartate binding site. Residues Arg1630, His1658, and Gln1661 each coordinate carbamoyl phosphate. Arg1691 and Arg1754 together coordinate L-aspartate. Carbamoyl phosphate-binding residues include Leu1793 and Pro1794.

This sequence in the N-terminal section; belongs to the CarA family. The protein in the central section; belongs to the CarB family. In the C-terminal section; belongs to the aspartate/ornithine carbamoyltransferase superfamily. ATCase family. Requires Mg(2+) as cofactor. Mn(2+) serves as cofactor.

The protein localises to the cytoplasm. Its subcellular location is the nucleus. It catalyses the reaction hydrogencarbonate + L-glutamine + 2 ATP + H2O = carbamoyl phosphate + L-glutamate + 2 ADP + phosphate + 2 H(+). It carries out the reaction L-glutamine + H2O = L-glutamate + NH4(+). The catalysed reaction is hydrogencarbonate + NH4(+) + 2 ATP = carbamoyl phosphate + 2 ADP + phosphate + 2 H(+). The enzyme catalyses carbamoyl phosphate + L-aspartate = N-carbamoyl-L-aspartate + phosphate + H(+). It participates in pyrimidine metabolism; UMP biosynthesis via de novo pathway; (S)-dihydroorotate from bicarbonate: step 1/3. The protein operates within pyrimidine metabolism; UMP biosynthesis via de novo pathway; (S)-dihydroorotate from bicarbonate: step 2/3. With respect to regulation, both CPSase and ATCase activities are feedback inhibited by the end product UTP. In terms of biological role, multifunctional protein that encodes the first 2 enzymatic activities of the de novo pyrimidine pathway: carbamoylphosphate synthetase (CPSase; EC 6.3.5.5) and aspartate transcarbamylase (ATCase; EC 2.1.3.2). The CPSase-function is accomplished in 2 steps, by a glutamine-dependent amidotransferase activity (GATase) that binds and cleaves glutamine to produce ammonia, followed by an ammonium-dependent carbamoyl phosphate synthetase, which reacts with the ammonia, hydrogencarbonate and ATP to form carbamoyl phosphate. The endogenously produced carbamoyl phosphate is sequestered and channeled to the ATCase active site. ATCase then catalyzes the formation of carbamoyl-L-aspartate from L-aspartate and carbamoyl phosphate. This chain is Multifunctional protein pyr-3 (pyr-3), found in Neurospora crassa (strain ATCC 24698 / 74-OR23-1A / CBS 708.71 / DSM 1257 / FGSC 987).